The sequence spans 135 residues: Photosystem II extrinsic protein V (135 aa).

Residues cysteine 37, cysteine 40, histidine 41, and histidine 92 each coordinate heme c.

It belongs to the cytochrome c family. PsbV subfamily. As to quaternary structure, PSII is composed of 1 copy each of membrane proteins PsbA, PsbB, PsbC, PsbD, PsbE, PsbF, PsbH, PsbI, PsbJ, PsbK, PsbL, PsbM, PsbT, PsbX, PsbY, PsbZ, Psb30/Ycf12, peripheral proteins PsbO, CyanoQ (PsbQ), PsbU, PsbV and a large number of cofactors. It forms dimeric complexes. Requires heme c as cofactor.

Its subcellular location is the cellular thylakoid membrane. One of the extrinsic, lumenal subunits of photosystem II (PSII). PSII is a light-driven water plastoquinone oxidoreductase, using light energy to abstract electrons from H(2)O, generating a proton gradient subsequently used for ATP formation. The extrinsic proteins stabilize the structure of photosystem II oxygen-evolving complex (OEC), the ion environment of oxygen evolution and protect the OEC against heat-induced inactivation. Low-potential cytochrome c that plays a role in the OEC of PSII. The protein is Photosystem II extrinsic protein V of Microcystis aeruginosa.